An 83-amino-acid chain; its full sequence is ATP synthase subunit c 2 (83 aa).

2 helical membrane passes run 8-28 (IASI…PALG) and 58-78 (LAMI…LLFA).

This sequence belongs to the ATPase C chain family. As to quaternary structure, F-type ATPases have 2 components, F(1) - the catalytic core - and F(0) - the membrane proton channel. F(1) has five subunits: alpha(3), beta(3), gamma(1), delta(1), epsilon(1). F(0) has four main subunits: a(1), b(1), b'(1) and c(10-14). The alpha and beta chains form an alternating ring which encloses part of the gamma chain. F(1) is attached to F(0) by a central stalk formed by the gamma and epsilon chains, while a peripheral stalk is formed by the delta, b and b' chains.

Its subcellular location is the cell inner membrane. F(1)F(0) ATP synthase produces ATP from ADP in the presence of a proton or sodium gradient. F-type ATPases consist of two structural domains, F(1) containing the extramembraneous catalytic core and F(0) containing the membrane proton channel, linked together by a central stalk and a peripheral stalk. During catalysis, ATP synthesis in the catalytic domain of F(1) is coupled via a rotary mechanism of the central stalk subunits to proton translocation. In terms of biological role, key component of the F(0) channel; it plays a direct role in translocation across the membrane. A homomeric c-ring of between 10-14 subunits forms the central stalk rotor element with the F(1) delta and epsilon subunits. The chain is ATP synthase subunit c 2 from Cereibacter sphaeroides (strain ATCC 17029 / ATH 2.4.9) (Rhodobacter sphaeroides).